The following is a 752-amino-acid chain: Photosystem I P700 chlorophyll a apoprotein A1 (752 aa).

The next 8 helical transmembrane spans lie at 73–96 (IFSAHFGQLAIIFLWLSGMYFHGA), 159–182 (LYATAIGGLFMACLMLFAGWFHYH), 198–222 (MNHHLAGLLGLGCLGWAGHQIHISI), 294–312 (TAHHHLALAVLFLVAGHMY), 349–372 (WHAQLAINLAMMGSLSIIVAHHMY), 388–414 (LSLFTHHMWIGGFCIVGAGAHASIFMV), 436–458 (AIISHLNWVCIFLGFHSFGLYIH), and 533–551 (FMVHHIHAFTIHVTVLILV). [4Fe-4S] cluster is bound by residues C575 and C584. The next 2 membrane-spanning stretches (helical) occupy residues 591–612 (HVFLGLFWMYNSLSIAIFHFSW) and 666–688 (LSAYGLIFLGAHFVWAFSLMFLF). H677 is a chlorophyll a' binding site. Residues M685 and Y693 each coordinate chlorophyll a. W694 provides a ligand contact to phylloquinone. Residues 726–746 (AVGVAHYLLGGIGTTWAFFLA) form a helical membrane-spanning segment.

It belongs to the PsaA/PsaB family. The PsaA/B heterodimer binds the P700 chlorophyll special pair and subsequent electron acceptors. PSI consists of a core antenna complex that captures photons, and an electron transfer chain that converts photonic excitation into a charge separation. The eukaryotic PSI reaction center is composed of at least 11 subunits. It depends on P700 is a chlorophyll a/chlorophyll a' dimer, A0 is one or more chlorophyll a, A1 is one or both phylloquinones and FX is a shared 4Fe-4S iron-sulfur center. as a cofactor.

The protein localises to the plastid. It localises to the chloroplast thylakoid membrane. The enzyme catalyses reduced [plastocyanin] + hnu + oxidized [2Fe-2S]-[ferredoxin] = oxidized [plastocyanin] + reduced [2Fe-2S]-[ferredoxin]. Functionally, psaA and PsaB bind P700, the primary electron donor of photosystem I (PSI), as well as the electron acceptors A0, A1 and FX. PSI is a plastocyanin/cytochrome c6-ferredoxin oxidoreductase, converting photonic excitation into a charge separation, which transfers an electron from the donor P700 chlorophyll pair to the spectroscopically characterized acceptors A0, A1, FX, FA and FB in turn. Oxidized P700 is reduced on the lumenal side of the thylakoid membrane by plastocyanin or cytochrome c6. In Gracilaria tenuistipitata var. liui (Red alga), this protein is Photosystem I P700 chlorophyll a apoprotein A1.